Consider the following 311-residue polypeptide: Aspartate carbamoyltransferase catalytic subunit (311 aa).

Arginine 55 and threonine 56 together coordinate carbamoyl phosphate. Residue lysine 85 coordinates L-aspartate. Positions 106, 135, and 138 each coordinate carbamoyl phosphate. Residues arginine 168 and arginine 230 each contribute to the L-aspartate site. The carbamoyl phosphate site is built by leucine 268 and proline 269.

Belongs to the aspartate/ornithine carbamoyltransferase superfamily. ATCase family. As to quaternary structure, heterododecamer (2C3:3R2) of six catalytic PyrB chains organized as two trimers (C3), and six regulatory PyrI chains organized as three dimers (R2).

The enzyme catalyses carbamoyl phosphate + L-aspartate = N-carbamoyl-L-aspartate + phosphate + H(+). Its pathway is pyrimidine metabolism; UMP biosynthesis via de novo pathway; (S)-dihydroorotate from bicarbonate: step 2/3. Its function is as follows. Catalyzes the condensation of carbamoyl phosphate and aspartate to form carbamoyl aspartate and inorganic phosphate, the committed step in the de novo pyrimidine nucleotide biosynthesis pathway. This chain is Aspartate carbamoyltransferase catalytic subunit, found in Cronobacter sakazakii (strain ATCC BAA-894) (Enterobacter sakazakii).